A 65-amino-acid polypeptide reads, in one-letter code: MKQDIHPKYNVVTVSCACGNEFESGSVKQALKVEICSNCHPFFTGKQKFVDAGGRVDRFKRKYNL.

Zn(2+) is bound by residues Cys16, Cys18, Cys36, and Cys39.

Belongs to the bacterial ribosomal protein bL31 family. Type A subfamily. In terms of assembly, part of the 50S ribosomal subunit. The cofactor is Zn(2+).

Binds the 23S rRNA. This chain is Large ribosomal subunit protein bL31, found in Brevibacillus brevis (strain 47 / JCM 6285 / NBRC 100599).